The chain runs to 3172 residues: Erythronolide synthase EryA3 (3172 aa).

The region spanning 38–452 (GEPIAIVGMA…GTNAHVIVEE (415 aa)) is the Ketosynthase family 3 (KS3) 1 domain. 2 module regions span residues 41–1464 (IAIV…DHYL) and 1492–2891 (IAIV…DHIG). Catalysis depends on C199, which acts as the Acyl-thioester intermediate; for beta-ketoacyl synthase 1 activity. Active-site for beta-ketoacyl synthase 1 activity residues include H334 and H374. An acyltransferase 1 region spans residues 557–874 (VFPGQGAQWQ…LGEAYAQGVE (318 aa)). S643 acts as the Acyl-ester intermediate; for acyltransferase 1 activity in catalysis. The beta-ketoacyl reductase 1 stretch occupies residues 1117–1294 (GTVLVTGGTG…VTSIAWGLWA (178 aa)). Residues 1125 to 1128 (TGGI), 1148 to 1151 (GRRG), 1177 to 1178 (DV), K1229, and 1249 to 1250 (FS) each bind NADP(+). The active-site Acyl-ester intermediate; for beta-ketoacyl reductase 1 activity is Y1264. The Carrier 1 domain occupies 1392–1467 (EHLAHLIRAE…RLADHYLERL (76 aa)). S1427 carries the O-(pantetheine 4'-phosphoryl)serine modification. A Ketosynthase family 3 (KS3) 2 domain is found at 1489 to 1916 (DDPIAIVGMA…GTNAHVIIAE (428 aa)). C1661 acts as the Acyl-thioester intermediate; for beta-ketoacyl synthase 2 activity in catalysis. Catalysis depends on for beta-ketoacyl synthase 2 activity residues H1797 and H1837. The acyltransferase 2 stretch occupies residues 2022–2331 (VFVFPGQGAQ…LARAHVHGVA (310 aa)). S2112 functions as the Acyl-ester intermediate; for acyltransferase 2 activity in the catalytic mechanism. The interval 2557–2731 (GTALVTGGTG…ATSVAWGAWA (175 aa)) is beta-ketoacyl reductase 2. NADP(+)-binding positions include 2565-2568 (TGAL), 2588-2591 (SRRG), 2617-2618 (DV), K2666, and 2686-2687 (FS). Y2701 (acyl-ester intermediate; for beta-ketoacyl reductase 2 activity) is an active-site residue. Residues 2819–2894 (QELLEFTHSH…RLADHIGQQL (76 aa)) form the Carrier 2 domain. S2854 is subject to O-(pantetheine 4'-phosphoryl)serine. The segment at 2960–3166 (ICCAGTAAIS…DAIARHIDAW (207 aa)) is thioesterase. A substrate-binding site is contributed by T2965. S3031 acts as the Nucleophile; for thioesterase activity in catalysis. 2 residues coordinate substrate: A3032 and D3058. Residue H3148 is the Proton acceptor; for thioesterase activity of the active site.

Homodimer. Erythronolide synthase is composed of EryAI, EryAII and EryAIII multimodular (2 modules) polypeptides each coding for a functional synthase subunit which participates in 2 of the six FAS-like elongation steps required for formation of the polyketide. Module 1, 2, 3, 4, 5, and 6 participating in biosynthesis steps 1, 2, 3, 4, 5, and 6, respectively. Requires pantetheine 4'-phosphate as cofactor.

It carries out the reaction 6 (S)-methylmalonyl-CoA + propanoyl-CoA + 6 NADPH + 12 H(+) = 6-deoxyerythronolide B + 6 CO2 + 6 NADP(+) + 7 CoA + H2O. The protein operates within antibiotic biosynthesis; erythromycin biosynthesis. With respect to regulation, inhibited by diphenyl phosphonates derivatives such as diphenyl allylphosphonate. Involved in the biosynthesis of antibiotic erythromycin via the biosynthesis of its aglycone precursor, 6-deoxyerythronolide B (6-dEB). The polypeptide is Erythronolide synthase EryA3 (Saccharopolyspora erythraea (Streptomyces erythraeus)).